The sequence spans 143 residues: Large ribosomal subunit protein uL11 (143 aa).

It belongs to the universal ribosomal protein uL11 family. In terms of assembly, part of the ribosomal stalk of the 50S ribosomal subunit. Interacts with L10 and the large rRNA to form the base of the stalk. L10 forms an elongated spine to which L12 dimers bind in a sequential fashion forming a multimeric L10(L12)X complex. In terms of processing, one or more lysine residues are methylated.

In terms of biological role, forms part of the ribosomal stalk which helps the ribosome interact with GTP-bound translation factors. The polypeptide is Large ribosomal subunit protein uL11 (Azotobacter vinelandii (strain DJ / ATCC BAA-1303)).